The chain runs to 360 residues: Phenylalanine--tRNA ligase alpha subunit (360 aa).

Glu260 provides a ligand contact to Mg(2+).

The protein belongs to the class-II aminoacyl-tRNA synthetase family. Phe-tRNA synthetase alpha subunit type 1 subfamily. Tetramer of two alpha and two beta subunits. It depends on Mg(2+) as a cofactor.

Its subcellular location is the cytoplasm. The catalysed reaction is tRNA(Phe) + L-phenylalanine + ATP = L-phenylalanyl-tRNA(Phe) + AMP + diphosphate + H(+). This Afipia carboxidovorans (strain ATCC 49405 / DSM 1227 / KCTC 32145 / OM5) (Oligotropha carboxidovorans) protein is Phenylalanine--tRNA ligase alpha subunit.